The primary structure comprises 415 residues: Serine hydroxymethyltransferase (415 aa).

Residues Leu-117 and Gly-121–Leu-123 each bind (6S)-5,6,7,8-tetrahydrofolate. Lys-226 carries the N6-(pyridoxal phosphate)lysine modification.

Belongs to the SHMT family. Homodimer. The cofactor is pyridoxal 5'-phosphate.

The protein resides in the cytoplasm. The catalysed reaction is (6R)-5,10-methylene-5,6,7,8-tetrahydrofolate + glycine + H2O = (6S)-5,6,7,8-tetrahydrofolate + L-serine. The protein operates within one-carbon metabolism; tetrahydrofolate interconversion. It functions in the pathway amino-acid biosynthesis; glycine biosynthesis; glycine from L-serine: step 1/1. In terms of biological role, catalyzes the reversible interconversion of serine and glycine with tetrahydrofolate (THF) serving as the one-carbon carrier. This reaction serves as the major source of one-carbon groups required for the biosynthesis of purines, thymidylate, methionine, and other important biomolecules. Also exhibits THF-independent aldolase activity toward beta-hydroxyamino acids, producing glycine and aldehydes, via a retro-aldol mechanism. The sequence is that of Serine hydroxymethyltransferase from Leptospira borgpetersenii serovar Hardjo-bovis (strain JB197).